Here is a 414-residue protein sequence, read N- to C-terminus: Ribulose bisphosphate carboxylase/oxygenase activase (414 aa).

An ATP-binding site is contributed by 37-44 (GRKGEGKT). Residues 296–326 (RGYQTAPPPEAPVIQPVNNSSHKQKTSNTHL) form a disordered region. The segment covering 311 to 326 (PVNNSSHKQKTSNTHL) has biased composition (polar residues).

It belongs to the RuBisCO activase family.

Activation of RuBisCO (ribulose-1,5-bisohosphate carboxylase/oxygenase; EC 4.1.1.39) involves the ATP-dependent carboxylation of the epsilon-amino group of lysine leading to a carbamate structure. This is Ribulose bisphosphate carboxylase/oxygenase activase (rca) from Nostoc sp. (strain PCC 7120 / SAG 25.82 / UTEX 2576).